Consider the following 297-residue polypeptide: Protein muscleblind (297 aa).

C3H1-type zinc fingers lie at residues 18–46 (WLQL…HPPA) and 52–80 (NGKV…HPPQ).

It belongs to the muscleblind family. Expressed in embryonic muscle cells.

Its subcellular location is the nucleus. Its function is as follows. Required for terminal differentiation of photoreceptor cells. Vital for embryonic development. The polypeptide is Protein muscleblind (mbl) (Drosophila melanogaster (Fruit fly)).